We begin with the raw amino-acid sequence, 300 residues long: Spermine synthase SPE4 (300 aa).

A Phosphoserine modification is found at Ser5. The 244-residue stretch at 12–255 folds into the PABS domain; it reads DGWFREINDK…GQLGLIVCSN (244 aa). S-adenosyl 3-(methylsulfanyl)propylamine is bound by residues Gln44, Asp99, Glu119, and 151-152; that span reads DG. Asp174 acts as the Proton acceptor in catalysis. Residue Asp177 participates in spermidine binding.

This sequence belongs to the spermidine/spermine synthase family.

The enzyme catalyses S-adenosyl 3-(methylsulfanyl)propylamine + spermidine = spermine + S-methyl-5'-thioadenosine + H(+). It functions in the pathway amine and polyamine biosynthesis; spermine biosynthesis; spermine from spermidine: step 1/1. This is Spermine synthase SPE4 (SPE4) from Saccharomyces cerevisiae (strain ATCC 204508 / S288c) (Baker's yeast).